The sequence spans 429 residues: S-adenosylmethionine synthase (429 aa).

His14 contributes to the ATP binding site. Asp16 is a binding site for Mg(2+). Position 42 (Glu42) interacts with K(+). 2 residues coordinate L-methionine: Glu55 and Gln98. Residues 98 to 108 are flexible loop; the sequence is QSADINRGVDR. ATP is bound by residues 165 to 167, 252 to 253, Asp261, 267 to 268, Ala284, and Lys288; these read DAK, KF, and RK. Asp261 contributes to the L-methionine binding site. Lys292 provides a ligand contact to L-methionine.

This sequence belongs to the AdoMet synthase family. In terms of assembly, homotetramer; dimer of dimers. Mg(2+) is required as a cofactor. It depends on K(+) as a cofactor.

The protein resides in the cytoplasm. The catalysed reaction is L-methionine + ATP + H2O = S-adenosyl-L-methionine + phosphate + diphosphate. It participates in amino-acid biosynthesis; S-adenosyl-L-methionine biosynthesis; S-adenosyl-L-methionine from L-methionine: step 1/1. Its function is as follows. Catalyzes the formation of S-adenosylmethionine (AdoMet) from methionine and ATP. The overall synthetic reaction is composed of two sequential steps, AdoMet formation and the subsequent tripolyphosphate hydrolysis which occurs prior to release of AdoMet from the enzyme. This chain is S-adenosylmethionine synthase, found in Porphyromonas gingivalis (strain ATCC BAA-308 / W83).